The sequence spans 536 residues: CBS domain-containing protein CBSCBSPB2 (536 aa).

Residues Met-1–Ser-23 are compositionally biased toward low complexity. The segment at Met-1 to Arg-60 is disordered. 4 consecutive CBS domains span residues Arg-66–Glu-124, Met-132–Lys-187, Val-228–Glu-287, and Met-295–Ser-354. Residues Val-406–Thr-489 form the PB1 domain. A helical membrane pass occupies residues Val-509–Val-529.

Its subcellular location is the membrane. The protein is CBS domain-containing protein CBSCBSPB2 (CBSCBSPB2) of Arabidopsis thaliana (Mouse-ear cress).